Here is a 364-residue protein sequence, read N- to C-terminus: MSSIFGKIFRVSTFGESHGGAVGVILDGCPPKLKINIDLIQNELDRRRPGQSKITTPRKEDDKLEILSGLKEGITLGTPIAMLVRNKDQRPEDYNNLEQVFRPSHADGTYHLKYGIQAGSGGGRASARETIGRVAAGAIAKQLLKTLFNTEILSWVKRIHDIDSQVNKNKLTLSKIDSNIVRCPDEKVATKMIQRIKELQQEGDSCGGVIECLVKNVPSGLGMPVFDKLEADLAKALMSLPATKGFEIGSGFLGTYLRGSEHNDSFVESDDINKLKTKSNNSGGIQGGISNGENIEMKIAFKPTATIGKEQKTVNSDGKEIVMKAKGRHDPCVLPRAVPMVDSMVALVLADHLLLHQAQCSIIK.

Residue Arg47 coordinates NADP(+). Residues 124–126, Gly287, 302–306, and Arg328 contribute to the FMN site; these read RAS and KPTAT.

It belongs to the chorismate synthase family. In terms of assembly, homotetramer. FMNH2 serves as cofactor.

It catalyses the reaction 5-O-(1-carboxyvinyl)-3-phosphoshikimate = chorismate + phosphate. It functions in the pathway metabolic intermediate biosynthesis; chorismate biosynthesis; chorismate from D-erythrose 4-phosphate and phosphoenolpyruvate: step 7/7. Its function is as follows. Catalyzes the anti-1,4-elimination of the C-3 phosphate and the C-6 proR hydrogen from 5-enolpyruvylshikimate-3-phosphate (EPSP) to yield chorismate, which is the branch point compound that serves as the starting substrate for the three terminal pathways of aromatic amino acid biosynthesis. This reaction introduces a second double bond into the aromatic ring system. The polypeptide is Chorismate synthase (Prochlorococcus marinus (strain MIT 9515)).